Reading from the N-terminus, the 944-residue chain is Valine--tRNA ligase (944 aa).

Residues 43–53 carry the 'HIGH' region motif; that stretch reads PNVTGTLHMGH. Residues 550-554 carry the 'KMSKS' region motif; the sequence is KMSKS. Residue K553 coordinates ATP. A coiled-coil region spans residues 878 to 944; the sequence is LVDMDAERTR…TGLREQRAKL (67 aa).

Belongs to the class-I aminoacyl-tRNA synthetase family. ValS type 1 subfamily. In terms of assembly, monomer.

It is found in the cytoplasm. The enzyme catalyses tRNA(Val) + L-valine + ATP = L-valyl-tRNA(Val) + AMP + diphosphate. Catalyzes the attachment of valine to tRNA(Val). As ValRS can inadvertently accommodate and process structurally similar amino acids such as threonine, to avoid such errors, it has a 'posttransfer' editing activity that hydrolyzes mischarged Thr-tRNA(Val) in a tRNA-dependent manner. This Xanthomonas campestris pv. campestris (strain 8004) protein is Valine--tRNA ligase.